A 266-amino-acid polypeptide reads, in one-letter code: Acetyl esterase (266 aa).

This Caldicellulosiruptor saccharolyticus (Caldocellum saccharolyticum) protein is Acetyl esterase (xynC).